Consider the following 103-residue polypeptide: Glutaredoxin-C1 (103 aa).

The 102-residue stretch at 1 to 102 (MDRVNRLAAQ…PLLRNAGALW (102 aa)) folds into the Glutaredoxin domain. Cysteines 21 and 24 form a disulfide.

This sequence belongs to the glutaredoxin family. CC-type subfamily.

Its subcellular location is the cytoplasm. Its function is as follows. Has a glutathione-disulfide oxidoreductase activity in the presence of NADPH and glutathione reductase. Reduces low molecular weight disulfides and proteins. The chain is Glutaredoxin-C1 (GRXC1) from Oryza sativa subsp. japonica (Rice).